A 197-amino-acid polypeptide reads, in one-letter code: Elongation factor Ts (197 aa).

The interval 81–84 (TDFV) is involved in Mg(2+) ion dislocation from EF-Tu.

Belongs to the EF-Ts family.

It is found in the cytoplasm. Functionally, associates with the EF-Tu.GDP complex and induces the exchange of GDP to GTP. It remains bound to the aminoacyl-tRNA.EF-Tu.GTP complex up to the GTP hydrolysis stage on the ribosome. This chain is Elongation factor Ts, found in Fervidobacterium nodosum (strain ATCC 35602 / DSM 5306 / Rt17-B1).